Here is a 390-residue protein sequence, read N- to C-terminus: Methylthioribose-1-phosphate isomerase (390 aa).

Substrate is bound by residues 53-55 (RGA), Arg-90, and Gln-207. The Proton donor role is filled by Asp-248. 258–259 (NK) is a binding site for substrate.

It belongs to the EIF-2B alpha/beta/delta subunits family. MtnA subfamily.

The enzyme catalyses 5-(methylsulfanyl)-alpha-D-ribose 1-phosphate = 5-(methylsulfanyl)-D-ribulose 1-phosphate. It carries out the reaction 5-deoxy-alpha-D-ribose 1-phosphate = 5-deoxy-D-ribulose 1-phosphate. It functions in the pathway amino-acid biosynthesis; L-methionine biosynthesis via salvage pathway; L-methionine from S-methyl-5-thio-alpha-D-ribose 1-phosphate: step 1/6. Functionally, catalyzes the interconversion of methylthioribose-1-phosphate (MTR-1-P) into methylthioribulose-1-phosphate (MTRu-1-P). Also catalyzes the interconversion of 5-deoxyribose 1-phosphate and 5-deoxyribulose 1-phosphate. Part of a bifunctional DHAP-shunt salvage pathway for SAM by-products. This chain is Methylthioribose-1-phosphate isomerase, found in Rhodospirillum rubrum (strain ATCC 11170 / ATH 1.1.1 / DSM 467 / LMG 4362 / NCIMB 8255 / S1).